Consider the following 86-residue polypeptide: Small ribosomal subunit protein bS20 (86 aa).

The tract at residues 1 to 21 (MANTKSAIKAARKSLRLHDRN) is disordered.

It belongs to the bacterial ribosomal protein bS20 family.

Its function is as follows. Binds directly to 16S ribosomal RNA. In Opitutus terrae (strain DSM 11246 / JCM 15787 / PB90-1), this protein is Small ribosomal subunit protein bS20.